The following is a 268-amino-acid chain: Malonyl-[acyl-carrier protein] O-methyltransferase 1 (268 aa).

Belongs to the methyltransferase superfamily.

The enzyme catalyses malonyl-[ACP] + S-adenosyl-L-methionine = malonyl-[ACP] methyl ester + S-adenosyl-L-homocysteine. Its pathway is cofactor biosynthesis; biotin biosynthesis. In terms of biological role, converts the free carboxyl group of a malonyl-thioester to its methyl ester by transfer of a methyl group from S-adenosyl-L-methionine (SAM). It allows to synthesize pimeloyl-ACP via the fatty acid synthetic pathway. This Ilyobacter polytropus (strain ATCC 51220 / DSM 2926 / LMG 16218 / CuHBu1) protein is Malonyl-[acyl-carrier protein] O-methyltransferase 1.